The chain runs to 292 residues: 4-diphosphocytidyl-2-C-methyl-D-erythritol kinase (292 aa).

Lys10 is a catalytic residue. Residue 94–104 participates in ATP binding; that stretch reads PVAAGLAGGSS. Residue Asp136 is part of the active site.

Belongs to the GHMP kinase family. IspE subfamily.

The catalysed reaction is 4-CDP-2-C-methyl-D-erythritol + ATP = 4-CDP-2-C-methyl-D-erythritol 2-phosphate + ADP + H(+). Its pathway is isoprenoid biosynthesis; isopentenyl diphosphate biosynthesis via DXP pathway; isopentenyl diphosphate from 1-deoxy-D-xylulose 5-phosphate: step 3/6. Its function is as follows. Catalyzes the phosphorylation of the position 2 hydroxy group of 4-diphosphocytidyl-2C-methyl-D-erythritol. The polypeptide is 4-diphosphocytidyl-2-C-methyl-D-erythritol kinase (Brevibacillus brevis (strain 47 / JCM 6285 / NBRC 100599)).